The primary structure comprises 208 residues: Proheparin-binding EGF-like growth factor (208 aa).

A signal peptide spans Met-1–Gly-23. A propeptide spanning residues Glu-24–Leu-62 is cleaved from the precursor. The Extracellular segment spans residues Glu-24 to Thr-161. Positions Thr-37–Gln-49 are enriched in polar residues. 2 disordered regions span residues Thr-37–Arg-57 and Gln-81–Lys-104. Thr-85 carries O-linked (GalNAc...) threonine glycosylation. The span at Lys-93–Gly-102 shows a compositional bias: basic residues. One can recognise an EGF-like domain in the interval Lys-104–His-144. 3 disulfide bridges follow: Cys-108/Cys-121, Cys-116/Cys-132, and Cys-134/Cys-143. Residues Pro-149–His-208 constitute a propeptide, C-terminal. Residues Ile-162 to Leu-182 form a helical membrane-spanning segment. Residues Met-183–His-208 lie on the Cytoplasmic side of the membrane.

In terms of assembly, interacts with FBLN1. Interacts with EGFR and ERBB4. Post-translationally, O-glycosylated. Macrophages, midbrain, cerebellum, hypothalamus, cerebral cortex, bulbourethral gland, lung, heart ventricle, kidney, skin, prostate, seminal vesicle, testis; at low levels in lymph node, thymus, spleen; not detected in pituitary, olfactory bulb, thyroid, duodenum, pancreas, liver, submaxillary gland.

It is found in the secreted. The protein localises to the extracellular space. It localises to the cell membrane. Functionally, growth factor that mediates its effects via EGFR, ERBB2 and ERBB4. Required for normal cardiac valve formation and normal heart function. Promotes smooth muscle cell proliferation. May be involved in macrophage-mediated cellular proliferation. It is mitogenic for fibroblasts, but not endothelial cells. It is able to bind EGF receptor/EGFR with higher affinity than EGF itself and is a far more potent mitogen for smooth muscle cells than EGF. Also acts as a diphtheria toxin receptor. The chain is Proheparin-binding EGF-like growth factor (HBEGF) from Sus scrofa (Pig).